Here is a 203-residue protein sequence, read N- to C-terminus: Adenylyl-sulfate kinase (203 aa).

35–42 (GLSGSGKS) contributes to the ATP binding site. S109 functions as the Phosphoserine intermediate in the catalytic mechanism.

Belongs to the APS kinase family.

The catalysed reaction is adenosine 5'-phosphosulfate + ATP = 3'-phosphoadenylyl sulfate + ADP + H(+). It participates in sulfur metabolism; hydrogen sulfide biosynthesis; sulfite from sulfate: step 2/3. Functionally, catalyzes the synthesis of activated sulfate. The protein is Adenylyl-sulfate kinase of Geotalea daltonii (strain DSM 22248 / JCM 15807 / FRC-32) (Geobacter daltonii).